The following is a 728-amino-acid chain: Leucine-rich repeat and calponin homology domain-containing protein 1 (728 aa).

Residues 24–36 (HHPHHHHHHHQHH) show a composition bias toward basic residues. The disordered stretch occupies residues 24–57 (HHPHHHHHHHQHHGGTGAPGGAGGGGGGSGGFNL). A compositionally biased stretch (gly residues) spans 37–54 (GGTGAPGGAGGGGGGSGG). LRR repeat units follow at residues 98–119 (DTVQ…LCHF), 121–143 (SLEI…VNLQ), 144–166 (MLTY…CGLP), 167–187 (LKVL…IGQL), 189–210 (QLME…IGQL), 212–234 (SLRE…VDLS), 235–255 (LVKF…FREM), 257–278 (QLQV…ICTK), and 283–304 (IFKY…YLHT). Residues 311-322 (HQHVEDGKKDSD) show a composition bias toward basic and acidic residues. The interval 311–348 (HQHVEDGKKDSDSGVGSDNGDKRLSATEPSDEDTVSLN) is disordered. S370 carries the phosphoserine modification. A disordered region spans residues 377–398 (HQEFQPEPSLLGDSTNSGEERD). S409 is modified (phosphoserine). Positions 516–525 (LQSNGSQYSP) are enriched in polar residues. The interval 516 to 547 (LQSNGSQYSPNEIRENSPAVSPTTNSTAPFGL) is disordered. Phosphoserine occurs at positions 532 and 536. Positions 533–543 (PAVSPTTNSTA) are enriched in polar residues. The residue at position 568 (T568) is a Phosphothreonine. The 117-residue stretch at 576 to 692 (MREEKELVEQ…TLLALGEKAP (117 aa)) folds into the Calponin-homology (CH) domain.

In terms of assembly, interacts (via LRR repeats) with unphosphorylated DOCK8 (via DHR-2 domain); the interaction prevents the interaction between DOCK8 and CDC42.

It is found in the cytoplasm. In terms of biological role, acts as a negative regulator of GTPase CDC42 by sequestering CDC42-guanine exchange factor DOCK8. Probably by preventing CDC42 activation, negatively regulates CD4(+) T-cell migration. This chain is Leucine-rich repeat and calponin homology domain-containing protein 1 (LRCH1), found in Homo sapiens (Human).